Here is a 625-residue protein sequence, read N- to C-terminus: UvrABC system protein C (625 aa).

The GIY-YIG domain occupies 26–105 (LEPGVYFLRD…IKQHQPHFNT (80 aa)). One can recognise a UVR domain in the interval 215–250 (GELLEKLATKMLAASENLDFEQAATIRDQIRGLQAL).

It belongs to the UvrC family. As to quaternary structure, interacts with UvrB in an incision complex.

It is found in the cytoplasm. Its function is as follows. The UvrABC repair system catalyzes the recognition and processing of DNA lesions. UvrC both incises the 5' and 3' sides of the lesion. The N-terminal half is responsible for the 3' incision and the C-terminal half is responsible for the 5' incision. The protein is UvrABC system protein C of Microcystis aeruginosa (strain NIES-843 / IAM M-2473).